Reading from the N-terminus, the 522-residue chain is Peptide chain release factor 3 (522 aa).

The tr-type G domain occupies 10–277 (ASRKTFAIIS…TFVDFAPSPS (268 aa)). GTP is bound by residues 19-26 (SHPDAGKT), 87-91 (DTPGH), and 141-144 (NKMD).

The protein belongs to the TRAFAC class translation factor GTPase superfamily. Classic translation factor GTPase family. PrfC subfamily.

The protein resides in the cytoplasm. Its function is as follows. Increases the formation of ribosomal termination complexes and stimulates activities of RF-1 and RF-2. It binds guanine nucleotides and has strong preference for UGA stop codons. It may interact directly with the ribosome. The stimulation of RF-1 and RF-2 is significantly reduced by GTP and GDP, but not by GMP. The polypeptide is Peptide chain release factor 3 (Listeria monocytogenes serotype 4b (strain CLIP80459)).